A 189-amino-acid polypeptide reads, in one-letter code: Tetratricopeptide repeat protein 36 (189 aa).

TPR repeat units lie at residues 51 to 84 (SKAL…LPER), 86 to 118 (SAYN…SGGR), and 123 to 156 (RQSF…GSPF).

Belongs to the TTC36 family.

This Homo sapiens (Human) protein is Tetratricopeptide repeat protein 36 (TTC36).